Reading from the N-terminus, the 277-residue chain is Caspase-3 (277 aa).

Methionine 1 bears the N-acetylmethionine mark. Propeptides lie at residues 1–9 (MENTENSVD) and 10–28 (SKSI…KSVD). Lysine 11 bears the N6-acetyllysine mark. Serine 26 bears the Phosphoserine mark. Catalysis depends on residues histidine 121 and cysteine 163. Position 163 is an S-nitrosocysteine; in inhibited form (cysteine 163).

The protein belongs to the peptidase C14A family. Heterotetramer that consists of two anti-parallel arranged heterodimers, each one formed by a 17 kDa (p17) and a 12 kDa (p12) subunit. Interacts with BIRC6/bruce. In terms of processing, cleavage by granzyme B, caspase-6, caspase-8 and caspase-10 generates the two active subunits. Additional processing of the propeptides is likely due to the autocatalytic activity of the activated protease. Active heterodimers between the small subunit of caspase-7 protease and the large subunit of caspase-3 also occur and vice versa. Post-translationally, S-nitrosylated on its catalytic site cysteine in unstimulated cell lines and denitrosylated upon activation of the Fas apoptotic pathway, associated with an increase in intracellular caspase activity. Fas therefore activates caspase-3 not only by inducing the cleavage of the caspase zymogen to its active subunits, but also by stimulating the denitrosylation of its active site thiol. Ubiquitinated by BIRC6; this activity is inhibited by DIABLO/SMAC.

The protein resides in the cytoplasm. It carries out the reaction Strict requirement for an Asp residue at positions P1 and P4. It has a preferred cleavage sequence of Asp-Xaa-Xaa-Asp-|- with a hydrophobic amino-acid residue at P2 and a hydrophilic amino-acid residue at P3, although Val or Ala are also accepted at this position.. Its activity is regulated as follows. Inhibited by BIRC6; following inhibition of BIRC6-caspase binding by DIABLO/SMAC, BIRC6 is subjected to caspase cleavage, leading to an increase in active caspases. Involved in the activation cascade of caspases responsible for apoptosis execution. At the onset of apoptosis, it proteolytically cleaves poly(ADP-ribose) polymerase PARP1 at a '216-Asp-|-Gly-217' bond. Cleaves and activates sterol regulatory element binding proteins (SREBPs) between the basic helix-loop-helix leucine zipper domain and the membrane attachment domain. Cleaves and activates caspase-6, -7 and -9 (CASP6, CASP7 and CASP9, respectively). Cleaves and inactivates interleukin-18 (IL18). Triggers cell adhesion in sympathetic neurons through RET cleavage. Cleaves IL-1 beta between an Asp and an Ala, releasing the mature cytokine which is involved in a variety of inflammatory processes. Cleaves and inhibits serine/threonine-protein kinase AKT1 in response to oxidative stress. Acts as an inhibitor of type I interferon production during virus-induced apoptosis by mediating cleavage of antiviral proteins CGAS, IRF3 and MAVS, thereby preventing cytokine overproduction. Also involved in pyroptosis by mediating cleavage and activation of gasdermin-E (GSDME). Cleaves XRCC4 and phospholipid scramblase proteins XKR4, XKR8 and XKR9, leading to promote phosphatidylserine exposure on apoptotic cell surface. Cleaves BIRC6 following inhibition of BIRC6-caspase binding by DIABLO/SMAC. The chain is Caspase-3 (CASP3) from Macaca fascicularis (Crab-eating macaque).